Reading from the N-terminus, the 177-residue chain is ATP synthase subunit delta (177 aa).

It belongs to the ATPase delta chain family. F-type ATPases have 2 components, F(1) - the catalytic core - and F(0) - the membrane proton channel. F(1) has five subunits: alpha(3), beta(3), gamma(1), delta(1), epsilon(1). F(0) has three main subunits: a(1), b(2) and c(10-14). The alpha and beta chains form an alternating ring which encloses part of the gamma chain. F(1) is attached to F(0) by a central stalk formed by the gamma and epsilon chains, while a peripheral stalk is formed by the delta and b chains.

It is found in the cell inner membrane. Its function is as follows. F(1)F(0) ATP synthase produces ATP from ADP in the presence of a proton or sodium gradient. F-type ATPases consist of two structural domains, F(1) containing the extramembraneous catalytic core and F(0) containing the membrane proton channel, linked together by a central stalk and a peripheral stalk. During catalysis, ATP synthesis in the catalytic domain of F(1) is coupled via a rotary mechanism of the central stalk subunits to proton translocation. In terms of biological role, this protein is part of the stalk that links CF(0) to CF(1). It either transmits conformational changes from CF(0) to CF(1) or is implicated in proton conduction. In Neisseria gonorrhoeae (strain NCCP11945), this protein is ATP synthase subunit delta.